Consider the following 398-residue polypeptide: Acetate kinase (398 aa).

Asn7 contributes to the Mg(2+) binding site. Lys14 contributes to the ATP binding site. Residue Arg91 participates in substrate binding. Catalysis depends on Asp148, which acts as the Proton donor/acceptor. ATP-binding positions include 208 to 212 (HLGNG), 283 to 285 (DFR), and 331 to 335 (GIGEH). Mg(2+) is bound at residue Glu386.

It belongs to the acetokinase family. As to quaternary structure, homodimer. Requires Mg(2+) as cofactor. It depends on Mn(2+) as a cofactor.

The protein resides in the cytoplasm. It carries out the reaction acetate + ATP = acetyl phosphate + ADP. It participates in metabolic intermediate biosynthesis; acetyl-CoA biosynthesis; acetyl-CoA from acetate: step 1/2. Its function is as follows. Catalyzes the formation of acetyl phosphate from acetate and ATP. Can also catalyze the reverse reaction. This is Acetate kinase from Clostridium botulinum (strain Alaska E43 / Type E3).